The chain runs to 198 residues: Pyridoxal 5'-phosphate synthase subunit PdxT (198 aa).

Position 52-54 (52-54 (GES)) interacts with L-glutamine. The active-site Nucleophile is the Cys84. Residues Arg116 and 143 to 144 (IR) contribute to the L-glutamine site. Residues His179 and Glu181 each act as charge relay system in the active site.

This sequence belongs to the glutaminase PdxT/SNO family. As to quaternary structure, in the presence of PdxS, forms a dodecamer of heterodimers. Only shows activity in the heterodimer.

It catalyses the reaction aldehydo-D-ribose 5-phosphate + D-glyceraldehyde 3-phosphate + L-glutamine = pyridoxal 5'-phosphate + L-glutamate + phosphate + 3 H2O + H(+). It carries out the reaction L-glutamine + H2O = L-glutamate + NH4(+). It participates in cofactor biosynthesis; pyridoxal 5'-phosphate biosynthesis. Functionally, catalyzes the hydrolysis of glutamine to glutamate and ammonia as part of the biosynthesis of pyridoxal 5'-phosphate. The resulting ammonia molecule is channeled to the active site of PdxS. The sequence is that of Pyridoxal 5'-phosphate synthase subunit PdxT from Caldivirga maquilingensis (strain ATCC 700844 / DSM 13496 / JCM 10307 / IC-167).